Reading from the N-terminus, the 211-residue chain is Peptide methionine sulfoxide reductase MsrA (211 aa).

Cys60 is a catalytic residue.

This sequence belongs to the MsrA Met sulfoxide reductase family.

The catalysed reaction is L-methionyl-[protein] + [thioredoxin]-disulfide + H2O = L-methionyl-(S)-S-oxide-[protein] + [thioredoxin]-dithiol. It carries out the reaction [thioredoxin]-disulfide + L-methionine + H2O = L-methionine (S)-S-oxide + [thioredoxin]-dithiol. In terms of biological role, has an important function as a repair enzyme for proteins that have been inactivated by oxidation. Catalyzes the reversible oxidation-reduction of methionine sulfoxide in proteins to methionine. In Methanosarcina mazei (strain ATCC BAA-159 / DSM 3647 / Goe1 / Go1 / JCM 11833 / OCM 88) (Methanosarcina frisia), this protein is Peptide methionine sulfoxide reductase MsrA.